Here is a 262-residue protein sequence, read N- to C-terminus: Leucine-rich repeat-containing protein 18 (262 aa).

LRR repeat units lie at residues 28-49 (GRKR…ILRL), 51-72 (DIDE…IAKF), 74-95 (NLRW…IGQM), 97-118 (SLLF…VELN), 122-144 (NIRT…GALK), 145-167 (ELHE…AKLP), and 168-189 (KLKK…EMFV).

In terms of tissue distribution, exclusively expressed in spermatocytes and roud spermatids within seminiferous tubules during spermatogenesis.

The protein localises to the cytoplasm. May be involved in the regulation of spermatogenesis and sperm maturation. This chain is Leucine-rich repeat-containing protein 18 (Lrrc18), found in Mus musculus (Mouse).